Here is a 398-residue protein sequence, read N- to C-terminus: G2/mitotic-specific cyclin-B2 (398 aa).

Position 8 is a phosphothreonine (Thr8). A phosphoserine mark is found at Ser11, Ser77, and Ser92. A Phosphothreonine modification is found at Thr94. 3 positions are modified to phosphoserine: Ser99, Ser392, and Ser398.

The protein belongs to the cyclin family. Cyclin AB subfamily. As to quaternary structure, interacts with the CDK1 protein kinase to form a serine/threonine kinase holoenzyme complex also known as maturation promoting factor (MPF). The cyclin subunit imparts substrate specificity to the complex.

In terms of biological role, essential for the control of the cell cycle at the G2/M (mitosis) transition. The protein is G2/mitotic-specific cyclin-B2 (CCNB2) of Macaca fascicularis (Crab-eating macaque).